The primary structure comprises 657 residues: Glycogen debranching enzyme (657 aa).

Asp-336 serves as the catalytic Nucleophile. Glu-371 acts as the Proton donor in catalysis. Basic and acidic residues predominate over residues 458-467; it reads NEANGEENRD. The interval 458–479 is disordered; the sequence is NEANGEENRDGTNNNYSNNHGK.

The protein belongs to the glycosyl hydrolase 13 family.

The catalysed reaction is Hydrolysis of (1-&gt;6)-alpha-D-glucosidic linkages to branches with degrees of polymerization of three or four glucose residues in limit dextrin.. The protein operates within glycan degradation; glycogen degradation. In terms of biological role, removes maltotriose and maltotetraose chains that are attached by 1,6-alpha-linkage to the limit dextrin main chain, generating a debranched limit dextrin. The sequence is that of Glycogen debranching enzyme from Escherichia coli (strain 55989 / EAEC).